The sequence spans 514 residues: 2,3-bisphosphoglycerate-independent phosphoglycerate mutase (514 aa).

Mn(2+) contacts are provided by aspartate 14 and serine 64. Residue serine 64 is the Phosphoserine intermediate of the active site. Substrate-binding positions include histidine 125, 155–156 (RD), arginine 187, arginine 193, 263–266 (RADR), and lysine 336. Residues aspartate 403, histidine 407, aspartate 444, histidine 445, and histidine 463 each contribute to the Mn(2+) site.

Belongs to the BPG-independent phosphoglycerate mutase family. As to quaternary structure, monomer. Mn(2+) serves as cofactor.

The enzyme catalyses (2R)-2-phosphoglycerate = (2R)-3-phosphoglycerate. It participates in carbohydrate degradation; glycolysis; pyruvate from D-glyceraldehyde 3-phosphate: step 3/5. Functionally, catalyzes the interconversion of 2-phosphoglycerate and 3-phosphoglycerate. The chain is 2,3-bisphosphoglycerate-independent phosphoglycerate mutase from Shewanella sp. (strain ANA-3).